Reading from the N-terminus, the 230-residue chain is 6-carboxyhexanoate--CoA ligase (230 aa).

This sequence belongs to the BioW family. As to quaternary structure, homodimer. Mg(2+) is required as a cofactor.

The catalysed reaction is heptanedioate + ATP + CoA = 6-carboxyhexanoyl-CoA + AMP + diphosphate. The protein operates within metabolic intermediate metabolism; pimeloyl-CoA biosynthesis; pimeloyl-CoA from pimelate: step 1/1. Its function is as follows. Catalyzes the transformation of pimelate into pimeloyl-CoA with concomitant hydrolysis of ATP to AMP. This is 6-carboxyhexanoate--CoA ligase from Staphylococcus aureus (strain MRSA252).